Here is an 838-residue protein sequence, read N- to C-terminus: V-type proton ATPase 116 kDa subunit a 1 (838 aa).

At 1-388 (MGELFRSEEM…DAYGIGTYRE (388 aa)) the chain is on the cytoplasmic side. The helical transmembrane segment at 389–407 (INPAPYTIITFPFLFAVMF) threads the bilayer. Residues 408-409 (GD) lie on the Vacuolar side of the membrane. A helical transmembrane segment spans residues 410–426 (FGHGILMTLIAIWMVLR). At 427–441 (ESRILSQKSDNEMFS) the chain is on the cytoplasmic side. The chain crosses the membrane as a helical span at residues 442–471 (TVFSGRYIILLMGLFSTYTGLIYNDCFSKS). Residues 472–535 (LNMFGSSWSV…ANNKLAFLNS (64 aa)) are Vacuolar-facing. The helical transmembrane segment at 536–555 (FKMKMSVILGIIHMLFGVML) threads the bilayer. Over 556-573 (SLLNHIYFKKPLNIYLGF) the chain is Cytoplasmic. The helical transmembrane segment at 574-594 (IPEMIFMSSLFGYLVILIFYK) threads the bilayer. Topologically, residues 595 to 639 (WTAYDAHTSKEAPSPLIHFINMFLFSYGDTSNKMLYRGQKGIQCF) are vacuolar. The chain crosses the membrane as a helical span at residues 640–659 (LVVVALLCVPWMLVAKPLVL). The Cytoplasmic portion of the chain corresponds to 660 to 725 (RHQYLRRKHL…DTVVYQAIHT (66 aa)). The chain crosses the membrane as a helical span at residues 726–750 (IEYCLGCISNTASYLRLWALSLAHA). Over 751–771 (QLSEVLWTMVIHTGLSVRSLA) the chain is Vacuolar. Residues 772 to 810 (GGFGLVFIFAAFATLTVAILLVMEGLSAFLHALRLHWIE) traverse the membrane as a helical segment. Residues 811 to 838 (FQNKFYTGTGFKFLPFSFDPIREGKFDD) lie on the Cytoplasmic side of the membrane.

This sequence belongs to the V-ATPase 116 kDa subunit family. V-ATPase is a heteromultimeric enzyme made up of two complexes: the ATP-hydrolytic V1 complex and the proton translocation V0 complex. The V1 complex consists of three catalytic AB heterodimers that form a heterohexamer, three peripheral stalks each consisting of EG heterodimers, one central rotor including subunits D and F, and the regulatory subunits C and H. The proton translocation complex V0 consists of the proton transport subunit a, a ring of proteolipid subunits c9c'', rotary subunit d, subunits e and f, and two accessory subunits. Detected in brain (at protein level). Highest expression in brain, intermediate levels in kidney, and relatively low levels in bone and liver.

Its subcellular location is the cytoplasmic vesicle. It localises to the clathrin-coated vesicle membrane. It is found in the secretory vesicle. The protein localises to the synaptic vesicle membrane. The protein resides in the melanosome. In terms of biological role, subunit of the V0 complex of vacuolar(H+)-ATPase (V-ATPase), a multisubunit enzyme composed of a peripheral complex (V1) that hydrolyzes ATP and a membrane integral complex (V0) that translocates protons. V-ATPase is responsible for acidifying and maintaining the pH of intracellular compartments and in some cell types, is targeted to the plasma membrane, where it is responsible for acidifying the extracellular environment. Required for assembly and activity of the vacuolar ATPase. The chain is V-type proton ATPase 116 kDa subunit a 1 (ATP6V0A1) from Gallus gallus (Chicken).